The sequence spans 396 residues: Inhibitory POU protein (396 aa).

Residues 86 to 95 (RAEALAAVDI) carry the POU-IV box motif. The 78-residue stretch at 222-299 (DTDTDPRELE…ILQAWLEEAE (78 aa)) folds into the POU-specific domain. A disordered region spans residues 302–328 (AKNKRRDPDAPSVLPAGEKKRKRTSIA). Positions 320–377 (KKRKRTSIAAPEKRSLEAYFAVQPRPSGEKIAAIAEKLDLKKNVVRVWFCNQRQKQKR) form a DNA-binding region, homeobox; atypical.

It belongs to the POU transcription factor family. Class-4 subfamily. Coexpressed with vvl in overlapping subsets of neurons in the embryonic central nervous system. Expressed in olfactory neurons.

It localises to the nucleus. Modulates gene transcription; simultaneously generates both a specific activator and an inhibitor of gene transcription, capable of modulating two distinct regulatory programs during neural development. Has a role in olfactory behavior. The chain is Inhibitory POU protein (acj6) from Drosophila melanogaster (Fruit fly).